The chain runs to 151 residues: Large ribosomal subunit protein uL15 (151 aa).

The disordered stretch occupies residues 1-58 (MTSISLDSLKPNKGARKRKTRKGRGIAAGQGASCGFGMRGQKSRSGRPTRPGFEGGQM). Over residues 13–24 (KGARKRKTRKGR) the composition is skewed to basic residues. Over residues 26–38 (IAAGQGASCGFGM) the composition is skewed to gly residues.

Belongs to the universal ribosomal protein uL15 family. Part of the 50S ribosomal subunit.

In terms of biological role, binds to the 23S rRNA. In Prochlorococcus marinus (strain SARG / CCMP1375 / SS120), this protein is Large ribosomal subunit protein uL15.